The sequence spans 631 residues: Phosphomethylpyrimidine synthase (631 aa).

Substrate is bound by residues asparagine 239, methionine 268, tyrosine 297, histidine 333, 353–355 (SRG), 394–397 (DGLR), and glutamate 433. Histidine 437 contacts Zn(2+). Tyrosine 460 contacts substrate. Histidine 501 serves as a coordination point for Zn(2+). Positions 581, 584, and 589 each coordinate [4Fe-4S] cluster.

It belongs to the ThiC family. In terms of assembly, homodimer. It depends on [4Fe-4S] cluster as a cofactor.

The catalysed reaction is 5-amino-1-(5-phospho-beta-D-ribosyl)imidazole + S-adenosyl-L-methionine = 4-amino-2-methyl-5-(phosphooxymethyl)pyrimidine + CO + 5'-deoxyadenosine + formate + L-methionine + 3 H(+). It participates in cofactor biosynthesis; thiamine diphosphate biosynthesis. Catalyzes the synthesis of the hydroxymethylpyrimidine phosphate (HMP-P) moiety of thiamine from aminoimidazole ribotide (AIR) in a radical S-adenosyl-L-methionine (SAM)-dependent reaction. This chain is Phosphomethylpyrimidine synthase, found in Salmonella paratyphi B (strain ATCC BAA-1250 / SPB7).